The sequence spans 24 residues: Small ribosomal subunit protein uS19c (24 aa).

This sequence belongs to the universal ribosomal protein uS19 family.

The protein localises to the plastid. It is found in the chloroplast. Protein S19 forms a complex with S13 that binds strongly to the 16S ribosomal RNA. In Petunia hybrida (Petunia), this protein is Small ribosomal subunit protein uS19c (rps19).